The following is a 662-amino-acid chain: Acetyl-coenzyme A synthetase (662 aa).

CoA is bound by residues 197 to 200 (RKGK) and threonine 317. ATP-binding positions include 393-395 (GEP), 417-422 (DTWWQT), aspartate 510, and arginine 525. Serine 533 provides a ligand contact to CoA. Arginine 536 serves as a coordination point for ATP. Mg(2+) contacts are provided by histidine 549 and valine 552. An N6-acetyllysine modification is found at lysine 623.

Belongs to the ATP-dependent AMP-binding enzyme family. Requires Mg(2+) as cofactor. Post-translationally, acetylated. Deacetylation by the SIR2-homolog deacetylase activates the enzyme.

It carries out the reaction acetate + ATP + CoA = acetyl-CoA + AMP + diphosphate. In terms of biological role, catalyzes the conversion of acetate into acetyl-CoA (AcCoA), an essential intermediate at the junction of anabolic and catabolic pathways. AcsA undergoes a two-step reaction. In the first half reaction, AcsA combines acetate with ATP to form acetyl-adenylate (AcAMP) intermediate. In the second half reaction, it can then transfer the acetyl group from AcAMP to the sulfhydryl group of CoA, forming the product AcCoA. The sequence is that of Acetyl-coenzyme A synthetase from Helicobacter acinonychis (strain Sheeba).